The primary structure comprises 252 residues: Pyrroloquinoline-quinone synthase (252 aa).

The protein belongs to the PqqC family.

It carries out the reaction 6-(2-amino-2-carboxyethyl)-7,8-dioxo-1,2,3,4,7,8-hexahydroquinoline-2,4-dicarboxylate + 3 O2 = pyrroloquinoline quinone + 2 H2O2 + 2 H2O + H(+). The protein operates within cofactor biosynthesis; pyrroloquinoline quinone biosynthesis. In terms of biological role, ring cyclization and eight-electron oxidation of 3a-(2-amino-2-carboxyethyl)-4,5-dioxo-4,5,6,7,8,9-hexahydroquinoline-7,9-dicarboxylic-acid to PQQ. The polypeptide is Pyrroloquinoline-quinone synthase (Acinetobacter baumannii (strain ACICU)).